The following is a 157-amino-acid chain: Jacalin-related lectin 15 (157 aa).

The Jacalin-type lectin domain maps to 13-152; the sequence is ADKLEAKGGN…LTSLGAYFAP (140 aa).

The protein belongs to the jacalin lectin family. As to expression, expressed in stems, leaves and flowers. Not detected in roots.

Functionally, confers broad resistance to potexviruses. Inhibits virus accumulation at the cellular level. In Arabidopsis thaliana (Mouse-ear cress), this protein is Jacalin-related lectin 15 (JAL15).